Reading from the N-terminus, the 558-residue chain is C4b-binding protein alpha chain (558 aa).

Residues Met1–Gly13 form the signal peptide. 8 consecutive Sushi domains span residues Lys14–Lys74, Lys75–Ile136, Ala137–Arg201, Ile202–Leu260, Asn261–Glu326, Ile327–Gln388, Ser389–Ala445, and Leu446–Gln503. Disulfide bonds link Cys15-Cys60, Cys45-Cys72, Cys77-Cys118, Cys104-Cys134, Cys139-Cys182, Cys168-Cys199, Cys204-Cys246, Cys232-Cys258, Cys263-Cys312, Cys296-Cys324, Cys329-Cys373, Cys363-Cys386, Cys390-Cys431, Cys417-Cys443, Cys447-Cys488, and Cys474-Cys501. Asn31 is a glycosylation site (N-linked (GlcNAc...) asparagine). Asn177 and Asn186 each carry an N-linked (GlcNAc...) asparagine glycan. Asn469 and Asn491 each carry an N-linked (GlcNAc...) asparagine glycan.

As to quaternary structure, disulfide-linked complex of alpha and beta chains.

Its subcellular location is the secreted. Its function is as follows. Controls the classical pathway of complement activation. It binds as a cofactor to C3b/C4b inactivator (C3bINA), which then hydrolyzes the complement fragment C4b. It also accelerates the degradation of the C4bC2a complex (C3 convertase) by dissociating the complement fragment C2a. Alpha chain binds C4b. It also interacts with anticoagulant protein S and with serum amyloid P component. This Rattus norvegicus (Rat) protein is C4b-binding protein alpha chain (C4bpa).